We begin with the raw amino-acid sequence, 264 residues long: MQINSIKIPLIELQNIKVVFGAKTALQNINLSIYPNTVITIVGPNGGGKSTLLKVLLKLLSPTDGKVIHHRDLRIGYVPQKIHLEQSLPITVEKFLSLKKGISKAEIQDAIELLSIKHLIHSSMQKLSGGEMQRVLLARALLNKPNLLVLDEPMQGVDLSGQIELYQLIHQTREKLNCAILMVSHDLHIVMADTNEVVCINRHICCAGSPEKVSNDPTFIHLFGDQFSQNVAFYTHHHNHQHNMHGDVCCIGNKHSVQCINNGR.

Positions 11–226 constitute an ABC transporter domain; sequence IELQNIKVVF…PTFIHLFGDQ (216 aa). 43–50 contributes to the ATP binding site; it reads GPNGGGKS.

This sequence belongs to the ABC transporter superfamily. Zinc importer (TC 3.A.1.15.5) family. The complex is composed of two ATP-binding proteins (ZnuC), two transmembrane proteins (ZnuB) and a solute-binding protein (ZnuA).

It localises to the cell inner membrane. The catalysed reaction is Zn(2+)(out) + ATP(in) + H2O(in) = Zn(2+)(in) + ADP(in) + phosphate(in) + H(+)(in). In terms of biological role, part of the ABC transporter complex ZnuABC involved in zinc import. Responsible for energy coupling to the transport system. The chain is Zinc import ATP-binding protein ZnuC from Mannheimia succiniciproducens (strain KCTC 0769BP / MBEL55E).